Consider the following 205-residue polypeptide: Holliday junction branch migration complex subunit RuvA (205 aa).

Residues 1-64 (MIGKLKGLID…EDQIKLFGFR (64 aa)) form a domain I region. The domain II stretch occupies residues 65 to 143 (SDLEREWFRL…GFASVDPAVA (79 aa)). Residues 144-153 (HLSGAIEERS) are flexible linker. The segment at 153-205 (SAPRPVADAISALVNLGYGQPQAAAAIAAAARSAGDAAQTAQLIKLGLKELSK) is domain III.

It belongs to the RuvA family. In terms of assembly, homotetramer. Forms an RuvA(8)-RuvB(12)-Holliday junction (HJ) complex. HJ DNA is sandwiched between 2 RuvA tetramers; dsDNA enters through RuvA and exits via RuvB. An RuvB hexamer assembles on each DNA strand where it exits the tetramer. Each RuvB hexamer is contacted by two RuvA subunits (via domain III) on 2 adjacent RuvB subunits; this complex drives branch migration. In the full resolvosome a probable DNA-RuvA(4)-RuvB(12)-RuvC(2) complex forms which resolves the HJ.

The protein localises to the cytoplasm. The RuvA-RuvB-RuvC complex processes Holliday junction (HJ) DNA during genetic recombination and DNA repair, while the RuvA-RuvB complex plays an important role in the rescue of blocked DNA replication forks via replication fork reversal (RFR). RuvA specifically binds to HJ cruciform DNA, conferring on it an open structure. The RuvB hexamer acts as an ATP-dependent pump, pulling dsDNA into and through the RuvAB complex. HJ branch migration allows RuvC to scan DNA until it finds its consensus sequence, where it cleaves and resolves the cruciform DNA. The chain is Holliday junction branch migration complex subunit RuvA from Rhodopseudomonas palustris (strain BisA53).